The chain runs to 458 residues: UDP-glycosyltransferase 76G1 (458 aa).

Residue H25 is the Proton acceptor of the active site. H25 serves as a coordination point for rebaudioside A. Position 25 (H25) interacts with rubusoside. Residue N27 coordinates UDP. The active-site Charge relay is D124. Residues 146-147 (TS) and H155 contribute to the rebaudioside A site. UDP-binding positions include S283, 338 to 339 (WV), and 356 to 364 (HSGWNSTLE). Rebaudioside A-binding positions include W359 and 380–381 (DQ).

This sequence belongs to the UDP-glycosyltransferase family. As to quaternary structure, monomer.

The catalysed reaction is steviolbioside + UDP-alpha-D-glucose = rebaudioside B + UDP + H(+). The enzyme catalyses stevioside + UDP-alpha-D-glucose = rebaudioside A + UDP + H(+). It carries out the reaction rebaudioside E + UDP-alpha-D-glucose = rebaudioside D + UDP + H(+). It catalyses the reaction rebaudioside D + UDP-alpha-D-glucose = rebaudioside M + UDP + H(+). Its function is as follows. Involved in the biosynthesis of steviol glycosides in leaves. Converts the di-glycoside steviolbioside to the tri-glycoside rebaudioside B. Converts the tri-glycoside stevioside to the tetra-glycoside rebaudioside A. Converts the tetra-glycoside rebaudioside E to the penta-glycoside rebaudioside D. Converts the penta-glycoside rebaudioside D to the hexa-glycoside rebaudioside M. Can glucosylate rubusoside and rebaudioside A in vitro. The chain is UDP-glycosyltransferase 76G1 from Stevia rebaudiana (Stevia).